The following is a 422-amino-acid chain: Exodeoxyribonuclease 7 large subunit (422 aa).

This sequence belongs to the XseA family. Heterooligomer composed of large and small subunits.

The protein localises to the cytoplasm. The catalysed reaction is Exonucleolytic cleavage in either 5'- to 3'- or 3'- to 5'-direction to yield nucleoside 5'-phosphates.. Bidirectionally degrades single-stranded DNA into large acid-insoluble oligonucleotides, which are then degraded further into small acid-soluble oligonucleotides. This chain is Exodeoxyribonuclease 7 large subunit, found in Leptospira interrogans serogroup Icterohaemorrhagiae serovar copenhageni (strain Fiocruz L1-130).